The primary structure comprises 273 residues: Cell division protein ZipA (273 aa).

Methionine 1 is a topological domain (periplasmic). Residues 2–22 (EFGLREWLIVIGIIVIAGILF) form a helical membrane-spanning segment. Residues 23-273 (DGWRRMRGGK…FERRQLTQKR (251 aa)) are Cytoplasmic-facing. The interval 65 to 125 (EMEPQLDEDD…QEPKKSAKLS (61 aa)) is disordered. Over residues 111 to 120 (VDDKPQEPKK) the composition is skewed to basic and acidic residues.

Belongs to the ZipA family. Interacts with FtsZ via their C-terminal domains.

The protein resides in the cell inner membrane. Essential cell division protein that stabilizes the FtsZ protofilaments by cross-linking them and that serves as a cytoplasmic membrane anchor for the Z ring. Also required for the recruitment to the septal ring of downstream cell division proteins. The chain is Cell division protein ZipA from Ectopseudomonas mendocina (strain ymp) (Pseudomonas mendocina).